The sequence spans 430 residues: Enolase (430 aa).

Residue Gln-168 coordinates (2R)-2-phosphoglycerate. The active-site Proton donor is the Glu-210. The Mg(2+) site is built by Asp-247, Glu-288, and Asp-315. Residues Lys-340, Arg-369, Ser-370, and Lys-391 each coordinate (2R)-2-phosphoglycerate. Residue Lys-340 is the Proton acceptor of the active site.

Belongs to the enolase family. Requires Mg(2+) as cofactor.

It is found in the cytoplasm. It localises to the secreted. The protein localises to the cell surface. The enzyme catalyses (2R)-2-phosphoglycerate = phosphoenolpyruvate + H2O. It participates in carbohydrate degradation; glycolysis; pyruvate from D-glyceraldehyde 3-phosphate: step 4/5. Its function is as follows. Catalyzes the reversible conversion of 2-phosphoglycerate (2-PG) into phosphoenolpyruvate (PEP). It is essential for the degradation of carbohydrates via glycolysis. This is Enolase from Picosynechococcus sp. (strain ATCC 27264 / PCC 7002 / PR-6) (Agmenellum quadruplicatum).